The sequence spans 210 residues: uncharacterized protein (210 aa).

Residues 1–21 (MLKMNVKKALVILVALALVAA) form the signal peptide.

This is an uncharacterized protein from Archaeoglobus fulgidus (strain ATCC 49558 / DSM 4304 / JCM 9628 / NBRC 100126 / VC-16).